We begin with the raw amino-acid sequence, 324 residues long: Serpentine receptor class gamma-10 (324 aa).

Helical transmembrane passes span 39–59 (SSYL…VFHG), 69–89 (MLYC…VIFG), 91–111 (IFIY…TPSI), 128–146 (TFSQ…IFLM), 155–175 (ILKP…WKIL), 206–226 (LFHF…TILG), 246–266 (MIMA…VFFA), and 279–299 (IVSF…IVMS).

The protein belongs to the nematode receptor-like protein srg family.

The protein localises to the membrane. The chain is Serpentine receptor class gamma-10 (srg-10) from Caenorhabditis elegans.